Reading from the N-terminus, the 223-residue chain is Phosphoglycolate phosphatase (223 aa).

Catalysis depends on Asp-10, which acts as the Nucleophile. The Mg(2+) site is built by Asp-10 and Asp-12. Residue Lys-149 coordinates substrate. Residues Asp-172 and Asp-176 each coordinate Mg(2+).

The protein belongs to the archaeal SPP-like hydrolase family. Mg(2+) is required as a cofactor.

It catalyses the reaction 2-phosphoglycolate + H2O = glycolate + phosphate. In terms of biological role, catalyzes the dephosphorylation of 2-phosphoglycolate. This is Phosphoglycolate phosphatase from Archaeoglobus fulgidus (strain ATCC 49558 / DSM 4304 / JCM 9628 / NBRC 100126 / VC-16).